The following is a 640-amino-acid chain: Chaperone protein DnaK (640 aa).

Phosphothreonine; by autocatalysis is present on threonine 201. Low complexity predominate over residues 603 to 621; that stretch reads AASADQGGAPGADAGNAGK. The disordered stretch occupies residues 603–625; the sequence is AASADQGGAPGADAGNAGKAQDD.

The protein belongs to the heat shock protein 70 family.

Functionally, acts as a chaperone. This is Chaperone protein DnaK from Stenotrophomonas maltophilia (strain K279a).